A 392-amino-acid chain; its full sequence is Chalcone synthase-like protein 1 (392 aa).

Residue Cys166 is part of the active site.

This sequence belongs to the thiolase-like superfamily. Chalcone/stilbene synthases family. In terms of tissue distribution, expressed at the same level in leaves and in glandular trichomes.

Its subcellular location is the cytoplasm. In terms of biological role, chalcone synthase that may use malonyl-CoA and hexanoyl-CoA as substrates but without producing olivetol or olivetolic acid. This Cannabis sativa (Hemp) protein is Chalcone synthase-like protein 1 (CAN383).